A 503-amino-acid polypeptide reads, in one-letter code: Type II secretion system ATPase E (503 aa).

The Zn(2+) site is built by cysteine 397, cysteine 400, cysteine 430, and cysteine 433.

It belongs to the GSP E family. As to quaternary structure, forms homooligomers; most probably hexamers. Interacts with EpsL/GspL. Requires Zn(2+) as cofactor.

It localises to the cell inner membrane. It catalyses the reaction ATP + H2O + cellular proteinSide 1 = ADP + phosphate + cellular proteinSide 2.. Functionally, ATPase component of the type II secretion system required for the energy-dependent secretion of extracellular factors such as proteases and toxins from the periplasm. Acts as a molecular motor to provide the energy that is required for assembly of the pseudopilus and the extrusion of substrates generated in the cytoplasm. This is Type II secretion system ATPase E (epsE) from Vibrio cholerae serotype O1 (strain ATCC 39315 / El Tor Inaba N16961).